A 211-amino-acid polypeptide reads, in one-letter code: MPLLGDDFPELKVQTTHGPMNIPGDLKGSWFVLFSHPADFTPVCTTEFVAFQQRVEAFEKIGCKLIGMSVDQVFSHIKWVEWIKENLDVDITFPIVAANDRIANKLGMLHPGKGTNTVRAVFVGDPNGKVRLVLYYPQEIGRNMDEILRAVKVLQISDSNKVAMPADWPNNLLIKDHVIIPPANNVEDAKKRKEQQYDCYDWWFCHKPLDK.

The Thioredoxin domain maps to 2–156 (PLLGDDFPEL…ILRAVKVLQI (155 aa)). The active-site Cysteine sulfenic acid (-SOH) intermediate is the C44. R119 serves as a coordination point for substrate. C199 and C205 form a disulfide bridge.

This sequence belongs to the peroxiredoxin family. Prx6 subfamily. Homodecamer. Pentamer of dimers that assemble into a ring structure.

It is found in the cytoplasm. The catalysed reaction is a hydroperoxide + [thioredoxin]-dithiol = an alcohol + [thioredoxin]-disulfide + H2O. Its function is as follows. Thiol-specific peroxidase that catalyzes the reduction of hydrogen peroxide and organic hydroperoxides to water and alcohols, respectively. Plays a role in cell protection against oxidative stress by detoxifying peroxides. The sequence is that of Peroxiredoxin from Chlorobaculum tepidum (strain ATCC 49652 / DSM 12025 / NBRC 103806 / TLS) (Chlorobium tepidum).